A 70-amino-acid polypeptide reads, in one-letter code: Mu-conotoxin-like Am3.4 (70 aa).

The first 20 residues, 1–20, serve as a signal peptide directing secretion; that stretch reads MMYKLGVLLIICLLLFPLTA. Residues 21–53 constitute a propeptide that is removed on maturation; the sequence is VPQDGDQPADRPAERMQDDISFEHDRFFDPVKR. Disulfide bonds link cysteine 54–cysteine 69, cysteine 55–cysteine 65, and cysteine 61–cysteine 68. At proline 67 the chain carries 4-hydroxyproline; partial; in major form. Cysteine 69 carries the cysteine amide modification.

Belongs to the conotoxin M superfamily. Contains 3 disulfide bonds. Expressed by the venom duct.

The protein resides in the secreted. Its function is as follows. Mu-conotoxins block voltage-gated sodium channels (Nav). This chain is Mu-conotoxin-like Am3.4, found in Conus amadis (Amadis cone).